Consider the following 226-residue polypeptide: Large ribosomal subunit protein uL1 (226 aa).

Belongs to the universal ribosomal protein uL1 family. In terms of assembly, part of the 50S ribosomal subunit.

In terms of biological role, binds directly to 23S rRNA. The L1 stalk is quite mobile in the ribosome, and is involved in E site tRNA release. Functionally, protein L1 is also a translational repressor protein, it controls the translation of the L11 operon by binding to its mRNA. The protein is Large ribosomal subunit protein uL1 of Borreliella burgdorferi (strain ATCC 35210 / DSM 4680 / CIP 102532 / B31) (Borrelia burgdorferi).